Reading from the N-terminus, the 232-residue chain is MLEGIIDINHIFDEEGIKTLKRFGWDGSVAVQNHNEYSEEIINSTVEYGEKHDFKVFSGVKISTKNQNEMEKAIKKYRNKVDILLVEGGDIKINRRVLEMNDVDILSTPELNRMDNGLDHILARLGSTNRVAIELNFGNLLKSRNYDRSKILWAFQRNLKLAKKYDTPVVISSGASDIYGIKAPGDLRGFLNTITDPLYSKKIMETTSKIIDYRLYLKKDTVLTLGIEIVEE.

The protein belongs to the eukaryotic/archaeal RNase P protein component 3 family. Consists of a catalytic RNA component and at least 4-5 protein subunits.

Its subcellular location is the cytoplasm. It carries out the reaction Endonucleolytic cleavage of RNA, removing 5'-extranucleotides from tRNA precursor.. In terms of biological role, part of ribonuclease P, a protein complex that generates mature tRNA molecules by cleaving their 5'-ends. This is Ribonuclease P protein component 3 from Methanococcus maripaludis (strain C6 / ATCC BAA-1332).